The primary structure comprises 217 residues: Protein canopy 4 (217 aa).

The signal sequence occupies residues 1-27 (MEMFTVFLFYMFSLVLANQEERLPNKC). Cystine bridges form between C27/C185, C30/C173, and C83/C145. The segment at 194–217 (MGMKGSEEESEGKDGKETHDAGEL) is disordered. The span at 205–217 (GKDGKETHDAGEL) shows a compositional bias: basic and acidic residues.

It belongs to the canopy family.

The protein resides in the secreted. The protein is Protein canopy 4 (cnpy4) of Danio rerio (Zebrafish).